Here is a 198-residue protein sequence, read N- to C-terminus: Small ribosomal subunit protein uS7 (198 aa).

Belongs to the universal ribosomal protein uS7 family. As to quaternary structure, part of the 30S ribosomal subunit.

Functionally, one of the primary rRNA binding proteins, it binds directly to 16S rRNA where it nucleates assembly of the head domain of the 30S subunit. Is located at the subunit interface close to the decoding center. The protein is Small ribosomal subunit protein uS7 of Desulfurococcus mucosus (Desulfurococcus mobilis).